A 653-amino-acid polypeptide reads, in one-letter code: Polyadenylate-binding protein, cytoplasmic and nuclear (653 aa).

The segment covering 1-10 (MPSTDLKKQA) has biased composition (basic and acidic residues). Residues 1-77 (MPSTDLKKQA…SVATPSGTAP (77 aa)) are disordered. Residues 17 to 27 (DVNTNNEAVES) are compositionally biased toward polar residues. Over residues 53–68 (AAEPSESTSTPTNASS) the composition is skewed to low complexity. Positions 80–158 (ASLYVGELDP…RPCRIMWSQR (79 aa)) constitute an RRM 1 domain. Thr167 is subject to Phosphothreonine. RRM domains lie at 168–245 (GNVF…HHVS), 261–338 (TNVY…RAQK), and 364–441 (VNLF…LAQR). The 78-residue stretch at 569-646 (PERFTAADLA…AIGVLQEFVD (78 aa)) folds into the PABC domain.

It belongs to the polyadenylate-binding protein type-1 family. Interacts with cid13.

The protein localises to the cytoplasm. Its subcellular location is the nucleus. Functionally, binds the poly(A) tail of mRNA. Appears to be an important mediator of the multiple roles of the poly(A) tail in mRNA biogenesis, stability and translation. In the nucleus, involved in both mRNA cleavage and polyadenylation. Is also required for efficient mRNA export to the cytoplasm. Acts in concert with a poly(A)-specific nuclease (PAN) to affect poly(A) tail shortening, which may occur concomitantly with either nucleocytoplasmic mRNA transport or translational initiation. In the cytoplasm, stimulates translation initiation and regulates mRNA decay through translation termination-coupled poly(A) shortening, probably mediated by PAN. This is Polyadenylate-binding protein, cytoplasmic and nuclear (pab1) from Schizosaccharomyces pombe (strain 972 / ATCC 24843) (Fission yeast).